Consider the following 197-residue polypeptide: RNA pyrophosphohydrolase (197 aa).

Positions glycine 6–arginine 150 constitute a Nudix hydrolase domain. A Nudix box motif is present at residues glycine 38–glycine 59.

It belongs to the Nudix hydrolase family. RppH subfamily. Requires a divalent metal cation as cofactor.

Accelerates the degradation of transcripts by removing pyrophosphate from the 5'-end of triphosphorylated RNA, leading to a more labile monophosphorylated state that can stimulate subsequent ribonuclease cleavage. This Haemophilus ducreyi (strain 35000HP / ATCC 700724) protein is RNA pyrophosphohydrolase.